Reading from the N-terminus, the 194-residue chain is IMP cyclohydrolase (194 aa).

Belongs to the archaeal IMP cyclohydrolase family.

The enzyme catalyses IMP + H2O = 5-formamido-1-(5-phospho-D-ribosyl)imidazole-4-carboxamide. It participates in purine metabolism; IMP biosynthesis via de novo pathway; IMP from 5-formamido-1-(5-phospho-D-ribosyl)imidazole-4-carboxamide: step 1/1. Functionally, catalyzes the cyclization of 5-formylamidoimidazole-4-carboxamide ribonucleotide to IMP. This Halobacterium salinarum (strain ATCC 29341 / DSM 671 / R1) protein is IMP cyclohydrolase.